Here is a 354-residue protein sequence, read N- to C-terminus: UDP-N-acetylglucosamine--N-acetylmuramyl-(pentapeptide) pyrophosphoryl-undecaprenol N-acetylglucosamine transferase (354 aa).

UDP-N-acetyl-alpha-D-glucosamine is bound by residues 15 to 17 (TGG), asparagine 127, arginine 163, serine 191, isoleucine 244, 263 to 268 (ALTVSE), and glutamine 288.

This sequence belongs to the glycosyltransferase 28 family. MurG subfamily.

It is found in the cell inner membrane. The catalysed reaction is di-trans,octa-cis-undecaprenyl diphospho-N-acetyl-alpha-D-muramoyl-L-alanyl-D-glutamyl-meso-2,6-diaminopimeloyl-D-alanyl-D-alanine + UDP-N-acetyl-alpha-D-glucosamine = di-trans,octa-cis-undecaprenyl diphospho-[N-acetyl-alpha-D-glucosaminyl-(1-&gt;4)]-N-acetyl-alpha-D-muramoyl-L-alanyl-D-glutamyl-meso-2,6-diaminopimeloyl-D-alanyl-D-alanine + UDP + H(+). It participates in cell wall biogenesis; peptidoglycan biosynthesis. Functionally, cell wall formation. Catalyzes the transfer of a GlcNAc subunit on undecaprenyl-pyrophosphoryl-MurNAc-pentapeptide (lipid intermediate I) to form undecaprenyl-pyrophosphoryl-MurNAc-(pentapeptide)GlcNAc (lipid intermediate II). The polypeptide is UDP-N-acetylglucosamine--N-acetylmuramyl-(pentapeptide) pyrophosphoryl-undecaprenol N-acetylglucosamine transferase (Vibrio cholerae serotype O1 (strain ATCC 39315 / El Tor Inaba N16961)).